The chain runs to 204 residues: Glycerol-3-phosphate acyltransferase (204 aa).

The next 5 helical transmembrane spans lie at 8 to 28, 53 to 73, 81 to 101, 116 to 136, and 155 to 175; these read MLVFAYLLGSINSAIIVCYIF, VPAIITLAFDILKGLVPVVLA, FITACTALYAILGHIFPIFFG, FGFSWILGLIFVVTWLCVAVI, and VIFTSDLQVATPFLIIAIIIL.

This sequence belongs to the PlsY family. Probably interacts with PlsX.

Its subcellular location is the cell inner membrane. The enzyme catalyses an acyl phosphate + sn-glycerol 3-phosphate = a 1-acyl-sn-glycero-3-phosphate + phosphate. The protein operates within lipid metabolism; phospholipid metabolism. Catalyzes the transfer of an acyl group from acyl-phosphate (acyl-PO(4)) to glycerol-3-phosphate (G3P) to form lysophosphatidic acid (LPA). This enzyme utilizes acyl-phosphate as fatty acyl donor, but not acyl-CoA or acyl-ACP. In Francisella philomiragia subsp. philomiragia (strain ATCC 25017 / CCUG 19701 / FSC 153 / O#319-036), this protein is Glycerol-3-phosphate acyltransferase.